We begin with the raw amino-acid sequence, 452 residues long: Low-affinity putrescine importer PlaP (452 aa).

Residues 1–16 lie on the Cytoplasmic side of the membrane; the sequence is MSHNVTPNTSRVELRK. Residues 17-37 form a helical membrane-spanning segment; that stretch reads TLTLVPVVMMGLAYMQPMTLF. Residues 38 to 48 are Periplasmic-facing; that stretch reads DTFGIVSGLTD. Residues 49 to 69 form a helical membrane-spanning segment; that stretch reads GHVPTAYAFALIAILFTALSY. The Cytoplasmic portion of the chain corresponds to 70 to 95; the sequence is GKLVRRYPSAGSAYTYAQKSISPTVG. Residues 96–116 traverse the membrane as a helical segment; that stretch reads FMVGWSSLLDYLFAPMINILL. At 117–123 the chain is on the periplasmic side; that stretch reads AKIYFEA. The helical transmembrane segment at 124 to 144 threads the bilayer; that stretch reads LVPSIPSWMFVVALVAFMTAF. Residues 145-158 are Cytoplasmic-facing; it reads NLRSLKSVANFNTV. Residues 159 to 179 form a helical membrane-spanning segment; sequence IVVLQVVLIAVILGMVVYGVF. Topologically, residues 180–199 are periplasmic; sequence EGEGAGTLASTRPFWSGDAH. The helical transmembrane segment at 200–220 threads the bilayer; sequence VIPMITGATILCFSFTGFDGI. Over 221–237 the chain is Cytoplasmic; the sequence is SNLSEETKDAERVIPRA. The helical transmembrane segment at 238–258 threads the bilayer; that stretch reads IFLTALIGGMIFIFATYFLQL. Residues 259–283 are Periplasmic-facing; that stretch reads YFPDISRFKDPDASQPEIMLYVAGK. The chain crosses the membrane as a helical span at residues 284 to 304; sequence AFQVGALIFSTITVLASGMAA. The Cytoplasmic segment spans residues 305–339; that stretch reads HAGVARLMYVMGRDGVFPKSFFGYVHPKWRTPAMN. 2 consecutive transmembrane segments (helical) span residues 340-360 and 361-381; these read IILVGAIALLAINFDLVMATA and LINFGALVAFTFVNLSVISQF. At 382 to 394 the chain is on the cytoplasmic side; sequence WIREKRNKTLKDH. Residues 395–415 form a helical membrane-spanning segment; the sequence is FQYLFLPMCGALTVGALWVNL. Topologically, residues 416–417 are periplasmic; sequence EE. A helical membrane pass occupies residues 418–438; that stretch reads SSMVLGLIWAAIGLIYLACVT. At 439–452 the chain is on the cytoplasmic side; the sequence is KSFRNPVPQYEDVA.

This sequence belongs to the amino acid-polyamine-organocation (APC) superfamily.

The protein localises to the cell inner membrane. It carries out the reaction putrescine(in) + H(+)(in) = putrescine(out) + H(+)(out). Its function is as follows. Putrescine importer. This chain is Low-affinity putrescine importer PlaP (plaP), found in Escherichia coli O157:H7.